A 462-amino-acid polypeptide reads, in one-letter code: Cysteine--tRNA ligase (462 aa).

C24 provides a ligand contact to Zn(2+). The 'HIGH' region motif lies at 26–36 (PTVYDDAHLGH). Positions 199, 224, and 228 each coordinate Zn(2+). The 'KMSKS' region motif lies at 256-260 (KMSKS). K259 is a binding site for ATP.

This sequence belongs to the class-I aminoacyl-tRNA synthetase family. As to quaternary structure, monomer. Requires Zn(2+) as cofactor.

It is found in the cytoplasm. It catalyses the reaction tRNA(Cys) + L-cysteine + ATP = L-cysteinyl-tRNA(Cys) + AMP + diphosphate. The sequence is that of Cysteine--tRNA ligase from Campylobacter jejuni subsp. jejuni serotype O:6 (strain 81116 / NCTC 11828).